Reading from the N-terminus, the 103-residue chain is MYAVFQSGGKQHRVSEGQTLRLEKLDVETGATVDFDNVLMIANGEEITVGAPLVAGGKVTAEVVQHGRGDKVKIVKFRRRKHSRKQQGHRQWFTEVRITGISA.

Belongs to the bacterial ribosomal protein bL21 family. As to quaternary structure, part of the 50S ribosomal subunit. Contacts protein L20.

In terms of biological role, this protein binds to 23S rRNA in the presence of protein L20. The chain is Large ribosomal subunit protein bL21 from Aliivibrio salmonicida (strain LFI1238) (Vibrio salmonicida (strain LFI1238)).